A 469-amino-acid polypeptide reads, in one-letter code: Cytoplasmic tRNA 2-thiolation protein 2 (469 aa).

Belongs to the CTU2/NCS2 family.

It localises to the cytoplasm. It participates in tRNA modification; 5-methoxycarbonylmethyl-2-thiouridine-tRNA biosynthesis. Its function is as follows. Plays a central role in 2-thiolation of mcm(5)S(2)U at tRNA wobble positions of tRNA(Lys), tRNA(Glu) and tRNA(Gln). May act by forming a heterodimer with NCS6 that ligates sulfur from thiocarboxylated URM1 onto the uridine of tRNAs at wobble position. Prior mcm(5) tRNA modification by the elongator complex is required for 2-thiolation. May also be involved in protein urmylation. This chain is Cytoplasmic tRNA 2-thiolation protein 2, found in Candida glabrata (strain ATCC 2001 / BCRC 20586 / JCM 3761 / NBRC 0622 / NRRL Y-65 / CBS 138) (Yeast).